The following is a 412-amino-acid chain: Tryptophan synthase beta chain (412 aa).

K92 is modified (N6-(pyridoxal phosphate)lysine).

Belongs to the TrpB family. In terms of assembly, tetramer of two alpha and two beta chains. Requires pyridoxal 5'-phosphate as cofactor.

The catalysed reaction is (1S,2R)-1-C-(indol-3-yl)glycerol 3-phosphate + L-serine = D-glyceraldehyde 3-phosphate + L-tryptophan + H2O. Its pathway is amino-acid biosynthesis; L-tryptophan biosynthesis; L-tryptophan from chorismate: step 5/5. Functionally, the beta subunit is responsible for the synthesis of L-tryptophan from indole and L-serine. The protein is Tryptophan synthase beta chain of Methylibium petroleiphilum (strain ATCC BAA-1232 / LMG 22953 / PM1).